Consider the following 341-residue polypeptide: uncharacterized protein (341 aa).

A coiled-coil region spans residues 153–179 (AYTLSEKVMNAEREAEETRETIIREAH). Over residues 319–335 (EQLQNPAPESAPSTSKT) the composition is skewed to polar residues. Residues 319 to 341 (EQLQNPAPESAPSTSKTLRSKNP) are disordered.

This is an uncharacterized protein from Coxiella burnetii (strain RSA 493 / Nine Mile phase I).